A 369-amino-acid chain; its full sequence is Glycerol-3-phosphate dehydrogenase [NAD(P)+] (369 aa).

5 residues coordinate NADPH: Ser-6, Trp-7, Arg-27, Arg-28, and Lys-101. Sn-glycerol 3-phosphate contacts are provided by Lys-101 and Gly-131. An NADPH-binding site is contributed by Ala-135. Sn-glycerol 3-phosphate contacts are provided by Lys-186, Asp-239, Ser-249, Arg-250, and Asn-251. Lys-186 (proton acceptor) is an active-site residue. Arg-250 provides a ligand contact to NADPH. Glu-276 contacts NADPH. The tract at residues 312–369 (KDIAPHLTTDDEPQGERTRGERTTDDGQGQGRTSVWGSLKRAFDQLRDGGGSSRRDRP) is disordered. Composition is skewed to basic and acidic residues over residues 325-336 (QGERTRGERTTD) and 352-369 (RAFD…RDRP).

Belongs to the NAD-dependent glycerol-3-phosphate dehydrogenase family.

Its subcellular location is the cytoplasm. It catalyses the reaction sn-glycerol 3-phosphate + NAD(+) = dihydroxyacetone phosphate + NADH + H(+). It carries out the reaction sn-glycerol 3-phosphate + NADP(+) = dihydroxyacetone phosphate + NADPH + H(+). Its pathway is membrane lipid metabolism; glycerophospholipid metabolism. Catalyzes the reduction of the glycolytic intermediate dihydroxyacetone phosphate (DHAP) to sn-glycerol 3-phosphate (G3P), the key precursor for phospholipid synthesis. The polypeptide is Glycerol-3-phosphate dehydrogenase [NAD(P)+] (Leifsonia xyli subsp. xyli (strain CTCB07)).